The following is a 603-amino-acid chain: Glutamyl-tRNA(Gln) amidotransferase subunit E (603 aa).

The protein belongs to the GatB/GatE family. GatE subfamily. As to quaternary structure, heterodimer of GatD and GatE.

The enzyme catalyses L-glutamyl-tRNA(Gln) + L-glutamine + ATP + H2O = L-glutaminyl-tRNA(Gln) + L-glutamate + ADP + phosphate + H(+). Its function is as follows. Allows the formation of correctly charged Gln-tRNA(Gln) through the transamidation of misacylated Glu-tRNA(Gln) in organisms which lack glutaminyl-tRNA synthetase. The reaction takes place in the presence of glutamine and ATP through an activated gamma-phospho-Glu-tRNA(Gln). The GatDE system is specific for glutamate and does not act on aspartate. This Thermoplasma acidophilum (strain ATCC 25905 / DSM 1728 / JCM 9062 / NBRC 15155 / AMRC-C165) protein is Glutamyl-tRNA(Gln) amidotransferase subunit E.